The sequence spans 844 residues: NADPH-Fe(3+) oxidoreductase subunit alpha (844 aa).

The 78-residue stretch at Met1–Lys78 folds into the 2Fe-2S ferredoxin-type domain. The [2Fe-2S] cluster site is built by Cys34, Cys45, Cys48, and Cys62. Residues Lys78–Gly117 form the 4Fe-4S His(Cys)3-ligated-type domain. 15 residues coordinate [4Fe-4S] cluster: His94, Cys98, Cys101, Cys107, Cys146, Cys149, Cys152, Cys186, Cys189, Cys192, Cys196, Cys222, Cys225, Cys229, and Cys256. 4Fe-4S ferredoxin-type domains follow at residues Pro137–Val168 and Asp177–Phe206. The 4Fe-4S Mo/W bis-MGD-type domain maps to Phe215–Asp270.

As to quaternary structure, heterotetramer with 2 beta subunits. It depends on [4Fe-4S] cluster as a cofactor.

It is found in the cell inner membrane. Its activity is regulated as follows. Not regulated by FAD or FMN. The SfrAB enzymatic complex is probably involved in acetate metabolism and does not participate directly in the reduction of Fe(3+) chelates. May serve as a major route for NADP regeneration. The protein is NADPH-Fe(3+) oxidoreductase subunit alpha (sfrA) of Geobacter sulfurreducens (strain DL-1 / KN400).